The primary structure comprises 1406 residues: DNA-directed RNA polymerase subunit beta' (1406 aa).

Residues Cys-70, Cys-72, Cys-85, and Cys-88 each coordinate Zn(2+). The Mg(2+) site is built by Asp-460, Asp-462, and Asp-464. Zn(2+) contacts are provided by Cys-814, Cys-888, Cys-895, and Cys-898.

This sequence belongs to the RNA polymerase beta' chain family. As to quaternary structure, the RNAP catalytic core consists of 2 alpha, 1 beta, 1 beta' and 1 omega subunit. When a sigma factor is associated with the core the holoenzyme is formed, which can initiate transcription. Mg(2+) serves as cofactor. Zn(2+) is required as a cofactor.

The catalysed reaction is RNA(n) + a ribonucleoside 5'-triphosphate = RNA(n+1) + diphosphate. Functionally, DNA-dependent RNA polymerase catalyzes the transcription of DNA into RNA using the four ribonucleoside triphosphates as substrates. The polypeptide is DNA-directed RNA polymerase subunit beta' (Yersinia pseudotuberculosis serotype O:1b (strain IP 31758)).